The following is a 309-amino-acid chain: Taste receptor type 2 member 46 (309 aa).

Residue M1 is a topological domain, extracellular. Residues 2 to 22 (ITFLPIIFSILIVVTFVIGNF) traverse the membrane as a helical segment. Residues 23 to 46 (ANGFIALANSIEWFKRQKISFADQ) are Cytoplasmic-facing. Residues 47-67 (ILTALAVSRVGLLWVLLLNWY) form a helical membrane-spanning segment. Residues 68 to 86 (ATELNPAFYSIEVRITAYN) lie on the Extracellular side of the membrane. A helical transmembrane segment spans residues 87-107 (LWAVINHFSNWLATSLSIFYL). At 108–126 (LKIANFSNLIFLCLKRRVK) the chain is on the cytoplasmic side. Residues 127–147 (SVVLVILLGPLLFLVCHLFVI) form a helical membrane-spanning segment. Residues 148-178 (NMNQIIWTKEYEGNMTWKIKLRSAMYLSNTT) lie on the Extracellular side of the membrane. N161 and N176 each carry an N-linked (GlcNAc...) asparagine glycan. Residues 179-199 (VTILANLVPFTLTLISFLLLI) traverse the membrane as a helical segment. Residues 200 to 229 (CSLCKHLEKMQLHGKGSQDPSMKVHIKALQ) lie on the Cytoplasmic side of the membrane. Residues 230-250 (TVTSFLLLCAIYFLSIIMSVW) form a helical membrane-spanning segment. Over 251 to 259 (SFESLENKP) the chain is Extracellular. Residues 260 to 280 (VFMFCEAITFSYPSTHPFILI) traverse the membrane as a helical segment. Residues 281-309 (WGNKKLKQTFLSVLWHVRYWVKGEKPSXP) are Cytoplasmic-facing.

Belongs to the G-protein coupled receptor T2R family.

It is found in the membrane. The protein resides in the cell projection. Its subcellular location is the cilium membrane. Functionally, receptor that may play a role in the perception of bitterness and is gustducin-linked. May play a role in sensing the chemical composition of the gastrointestinal content. The activity of this receptor may stimulate alpha gustducin, mediate PLC-beta-2 activation and lead to the gating of TRPM5. In airway epithelial cells, binding of bitter compounds increases the intracellular calcium ion concentration and stimulates ciliary beat frequency. This Pan troglodytes (Chimpanzee) protein is Taste receptor type 2 member 46 (TAS2R46).